The sequence spans 2282 residues: Zonadhesin (2282 aa).

2 MAM domains span residues 1-147 and 150-315; these read MFFA…PCGE and PQCV…TCHV. Residues 1 to 2235 are Extracellular-facing; sequence MFFATGRASA…VLLPPKPDTS (2235 aa). Residues asparagine 112 and asparagine 272 are each glycosylated (N-linked (GlcNAc...) asparagine). Residues 315 to 498 are 26 X approximate heptapeptide repeats (mucin-like domain); it reads VPVPPVIPIK…STTTTPSPTT (184 aa). Low complexity predominate over residues 333–356; that stretch reads PTVPAEGTTEPPEGTIELPEGTTK. Residues 333–495 form a disordered region; sequence PTVPAEGTTE…TTLSTTTTPS (163 aa). A compositionally biased stretch (acidic residues) spans 360–369; that stretch reads ETTELPEEIT. Residues 379–398 are compositionally biased toward pro residues; sequence TEPPTVPTEPPTVPTEPPTV. Low complexity-rich tracts occupy residues 399–420 and 427–495; these read PTEK…TSIP and PTEK…TTPS. The TIL 1 domain occupies 501-550; the sequence is CPANAHYESCACPASCKHPKASCKPPCQPGCVCDPGLVFSNNSCIKASSC. N-linked (GlcNAc...) asparagine glycans are attached at residues asparagine 541 and asparagine 569. The VWFC 1 domain maps to 551–605; that stretch reads PCLYNNNNYEPEAEWFSPNCTELCHCWPGGRIECQISQCKTHTKCQLKNGQYECQ. A VWFD 1 domain is found at 610–787; it reads ATCFVYGDPH…WAQDEDKECQ (178 aa). 2 cysteine pairs are disulfide-bonded: cysteine 612–cysteine 747 and cysteine 634–cysteine 786. The TIL 2 domain occupies 881-934; it reads CPPNSRYSLCTSPCPKTCHTGYVGMPCPEQCLEGCECNPGFILSGLECVPSAQC. The VWFC 2 domain occupies 935–990; sequence GCLDPSRGYFKVGEQWFKSDCKQLCICEGSNQIRCQPWKCGPHEVCSQQSGIYGCH. The VWFD 2 domain maps to 995-1176; sequence ATCSASGDPH…LEEGSETGCF (182 aa). Disulfide bonds link cysteine 997/cysteine 1136 and cysteine 1019/cysteine 1175. Residues asparagine 1141, asparagine 1259, asparagine 1270, asparagine 1355, asparagine 1467, and asparagine 1483 are each glycosylated (N-linked (GlcNAc...) asparagine). The TIL 3 domain maps to 1267–1322; it reads CPPNSSYSPCGSPCPGTCLSLNHPKDCPITLPCVEGCECQNGYILSGTSCVPLNQC. A VWFC 3 domain is found at 1323-1379; the sequence is GCTDFEGSYHLVRESWYTDNTCSRLCTCSLHNNITCRQTACKPGQQCWAVDGLLRCR. One can recognise a VWFD 3 domain in the interval 1384–1564; that stretch reads GVCQVTGDSR…KDNNIDPNCQ (181 aa). Disulfide bonds link cysteine 1386-cysteine 1525 and cysteine 1408-cysteine 1563. The disordered stretch occupies residues 1561–1588; the sequence is PNCQKSQEGKGKPQEEQGPSGSSKKASC. Residues 1577-1586 show a composition bias toward polar residues; it reads QGPSGSSKKA. Asparagine 1662 carries an N-linked (GlcNAc...) asparagine glycan. A TIL 4 domain is found at 1670–1726; sequence CPAYSTYTNCLPSCSPSCFDPDGRCEGARAPSSCAEGCTCQPGYVLSKNKCVAKDQC. The VWFC 4 domain maps to 1727-1782; the sequence is SCRDAQGGSIPSGKSWVSSGCSQKCACTEGSIQCRAFHCPSRSHCKLNSNGNSNCV. Positions 1787-1963 constitute a VWFD 4 domain; it reads DQCSIFGGPH…SWEVKTEDSV (177 aa). Cysteine 1789 and cysteine 1926 form a disulfide bridge. Asparagine 1997 carries N-linked (GlcNAc...) asparagine glycosylation. The 54-residue stretch at 2076–2129 folds into the TIL 5 domain; that stretch reads CPANTVYQSCMTPCPESCANLAAPRDCEGPCVEGCASLPGYAFSGAQSLPLANC. The region spanning 2130-2184 is the VWFC 5 domain; it reads GCTSNGIYYQLGHSFVTADCSQRCTCASSGVLLCEPFSCRPGESCTLGNLTRGCF. N-linked (GlcNAc...) asparagine glycosylation is present at asparagine 2178. The 37-residue stretch at 2185–2221 folds into the EGF-like domain; that stretch reads RESPCLRNPCQNDGRCREQGTSFTCECEPGYGGHLCT. Cystine bridges form between cysteine 2189–cysteine 2200, cysteine 2194–cysteine 2209, and cysteine 2211–cysteine 2220. Residues 2236 to 2256 form a helical membrane-spanning segment; it reads NLVAILLGMLVSLVVTVPVLA. At 2257 to 2282 the chain is on the cytoplasmic side; it reads RKCVSRKRRRWREKTQSEPRSAPGRR.

Probably forms covalent oligomers.

The protein resides in the cell membrane. Functionally, binds in a species-specific manner to the zona pellucida of the egg. May be involved in gamete recognition and/or signaling. The polypeptide is Zonadhesin (ZAN) (Oryctolagus cuniculus (Rabbit)).